A 329-amino-acid chain; its full sequence is Flotillin-like protein FloA (329 aa).

Transmembrane regions (helical) follow at residues 6–26 (FIVIAVIIVVALLILFSFVPI) and 27–47 (GLWISALAAGVHVGIGTLVGM).

It belongs to the flotillin-like FloA family. Homooligomerizes.

The protein localises to the cell membrane. It is found in the membrane raft. In terms of biological role, found in functional membrane microdomains (FMM) that may be equivalent to eukaryotic membrane rafts. FMMs are highly dynamic and increase in number as cells age. Flotillins are thought to be important factors in membrane fluidity. The sequence is that of Flotillin-like protein FloA from Staphylococcus aureus (strain USA300).